We begin with the raw amino-acid sequence, 565 residues long: NAD-dependent malic enzyme (565 aa).

Tyr-103 serves as the catalytic Proton donor. Lys-177 (proton acceptor) is an active-site residue. A divalent metal cation-binding residues include Glu-248, Asp-249, and Asp-272. Asp-272 and Asn-419 together coordinate NAD(+). Ser-445 is modified (phosphoserine).

Belongs to the malic enzymes family. The cofactor is Mg(2+). Requires Mn(2+) as cofactor.

The enzyme catalyses (S)-malate + NAD(+) = pyruvate + CO2 + NADH. It carries out the reaction oxaloacetate + H(+) = pyruvate + CO2. This chain is NAD-dependent malic enzyme (mae2), found in Schizosaccharomyces pombe (strain 972 / ATCC 24843) (Fission yeast).